Consider the following 138-residue polypeptide: Large ribosomal subunit protein uL14m (138 aa).

Belongs to the universal ribosomal protein uL14 family. In terms of assembly, component of the mitochondrial large ribosomal subunit (mt-LSU). Mature yeast 74S mitochondrial ribosomes consist of a small (37S) and a large (54S) subunit. The 37S small subunit contains a 15S ribosomal RNA (15S mt-rRNA) and 34 different proteins. The 54S large subunit contains a 21S rRNA (21S mt-rRNA) and 46 different proteins.

Its subcellular location is the mitochondrion. Component of the mitochondrial ribosome (mitoribosome), a dedicated translation machinery responsible for the synthesis of mitochondrial genome-encoded proteins, including at least some of the essential transmembrane subunits of the mitochondrial respiratory chain. The mitoribosomes are attached to the mitochondrial inner membrane and translation products are cotranslationally integrated into the membrane. This is Large ribosomal subunit protein uL14m (MRPL38) from Saccharomyces cerevisiae (strain ATCC 204508 / S288c) (Baker's yeast).